Consider the following 183-residue polypeptide: 2-hydroxy-1,4-benzoquinone reductase (183 aa).

FMN is bound by residues 11–18 (SLRRDSFN), 77–80 (EYNR), and serine 113.

This sequence belongs to the SsuE family. In terms of assembly, homotetramer. FMN is required as a cofactor.

It catalyses the reaction 2-hydroxy-1,4-benzoquinone + NADH + 2 H(+) = benzene-1,2,4-triol + NAD(+). Functionally, involved in the metabolism of 4-aminophenol. Catalyzes the reduction of the auto-oxidation product 2-hydroxy-1,4-benzoquinone back to hydroxyquinol. Has a broad substrate specificity toward benzoquinones, converting them to the corresponding 1,4-benzenediols. The chain is 2-hydroxy-1,4-benzoquinone reductase from Burkholderia sp.